Here is a 236-residue protein sequence, read N- to C-terminus: Small ribosomal subunit protein uS2c (236 aa).

This sequence belongs to the universal ribosomal protein uS2 family.

It is found in the plastid. Its subcellular location is the chloroplast. The protein is Small ribosomal subunit protein uS2c (rps2) of Helianthus annuus (Common sunflower).